A 760-amino-acid polypeptide reads, in one-letter code: Histone-lysine N-methyltransferase EZH2 (760 aa).

2 disordered regions span residues 208–231 (KDDA…SKKF) and 356–444 (PERA…PENV). Over residues 361–373 (TPSKRSTGRRRGR) the composition is skewed to basic residues. Residues 375–388 (PNSNSRPSTPTVNS) show a composition bias toward polar residues. A compositionally biased stretch (basic and acidic residues) spans 389-400 (ETKDTDSDREGG). One can recognise a CXC domain in the interval 517 to 619 (CRKIQLKKDG…SKNVSCKNCS (103 aa)). Residues 626 to 741 (KHLLLAPSDV…TGEELFFDYR (116 aa)) enclose the SET domain.

It belongs to the class V-like SAM-binding methyltransferase superfamily. Histone-lysine methyltransferase family. EZ subfamily. Component of the prc2/eed-ezh2 complex.

It is found in the nucleus. It carries out the reaction L-lysyl(27)-[histone H3] + 3 S-adenosyl-L-methionine = N(6),N(6),N(6)-trimethyl-L-lysyl(27)-[histone H3] + 3 S-adenosyl-L-homocysteine + 3 H(+). In terms of biological role, polycomb group (PcG) protein. Catalytic subunit of the prc2/eed-ezh2 complex, which methylates 'Lys-9' and 'Lys-27' of histone H3, leading to transcriptional repression of the affected target gene. May regulate the circadian clock via histone methylation at the promoter of the circadian genes. This is Histone-lysine N-methyltransferase EZH2 (ezh2) from Danio rerio (Zebrafish).